Here is a 183-residue protein sequence, read N- to C-terminus: Putative 3-methyladenine DNA glycosylase (183 aa).

This sequence belongs to the DNA glycosylase MPG family.

The sequence is that of Putative 3-methyladenine DNA glycosylase from Rickettsia conorii (strain ATCC VR-613 / Malish 7).